The chain runs to 665 residues: RNA polymerase II-associated protein 3 (665 aa).

Thr-2 is subject to N-acetylthreonine. Residues 8–41 form a TPR 1 repeat; sequence IELQLQVKQNAEELQDFMRDLENWEKDIKQKDME. The tract at residues 37 to 82 is disordered; that stretch reads QKDMELRRQNGVPEENLPPIRNGNFRKKKKGKAKESSKKTREENTK. A compositionally biased stretch (basic and acidic residues) spans 69-82; the sequence is AKESSKKTREENTK. Ser-87, Ser-116, Ser-119, and Ser-121 each carry phosphoserine. The disordered stretch occupies residues 109-129; sequence DSTHESLSQESESEEDGIHVD. TPR repeat units follow at residues 133–166, 168–200, 201–234, 282–315, 317–349, and 350–383; these read ALVLKEKGNKYFKQGKYDEAIDCYTKGMDADPYN, VLPTNRASAYFRLKKFAVAESDCNLAVALNRSY, TKAYSRRGAARFALQKLEEAKKDYERVLELEPNN, AISEKDRGNGFFKEGKYERAIECYTRGIAADGAN, LLPANRAMAYLKIQKYEEAEKDCTQAILLDGSY, and SKAFARRGTARTFLGKLNEAKQDFETVLLLEPGN. Residue Ser-481 is modified to Phosphoserine. Lys-498 participates in a covalent cross-link: Glycyl lysine isopeptide (Lys-Gly) (interchain with G-Cter in SUMO2).

This sequence belongs to the RPAP3 family. In terms of assembly, tightly associated with the RNA polymerase II complex. Component of the R2TP complex composed at least of RUVBL1, RUVBL2, RPAP3 and PIHD1. Component of the PAQosome complex which is responsible for the biogenesis of several protein complexes and which consists of R2TP complex members RUVBL1, RUVBL2, RPAP3 and PIH1D1, URI complex members PFDN2, PFDN6, PDRG1, UXT and URI1 as well as ASDURF, POLR2E and DNAAF10/WDR92. Interacts with PIH1D1. Interacts with TSC1 and TSC2. Interacts with PRPF8 and EFTUD2 in a ZNHIT2-dependent manner.

Functionally, forms an interface between the RNA polymerase II enzyme and chaperone/scaffolding protein, suggesting that it is required to connect RNA polymerase II to regulators of protein complex formation. In Homo sapiens (Human), this protein is RNA polymerase II-associated protein 3 (RPAP3).